A 122-amino-acid chain; its full sequence is Large ribosomal subunit protein uL14c (122 aa).

This sequence belongs to the universal ribosomal protein uL14 family. Part of the 50S ribosomal subunit.

The protein localises to the plastid. It is found in the chloroplast. In terms of biological role, binds to 23S rRNA. The polypeptide is Large ribosomal subunit protein uL14c (Populus trichocarpa (Western balsam poplar)).